Here is a 211-residue protein sequence, read N- to C-terminus: Ribosomal RNA small subunit methyltransferase G (211 aa).

S-adenosyl-L-methionine is bound by residues Gly81, Leu86, 132 to 133 (AE), and Arg147.

The protein belongs to the methyltransferase superfamily. RNA methyltransferase RsmG family.

It localises to the cytoplasm. It carries out the reaction guanosine(527) in 16S rRNA + S-adenosyl-L-methionine = N(7)-methylguanosine(527) in 16S rRNA + S-adenosyl-L-homocysteine. In terms of biological role, specifically methylates the N7 position of guanine in position 527 of 16S rRNA. This is Ribosomal RNA small subunit methyltransferase G from Dichelobacter nodosus (strain VCS1703A).